The primary structure comprises 258 residues: Imidazole glycerol phosphate synthase subunit HisF (258 aa).

Active-site residues include Asp11 and Asp130.

This sequence belongs to the HisA/HisF family. Heterodimer of HisH and HisF.

Its subcellular location is the cytoplasm. It carries out the reaction 5-[(5-phospho-1-deoxy-D-ribulos-1-ylimino)methylamino]-1-(5-phospho-beta-D-ribosyl)imidazole-4-carboxamide + L-glutamine = D-erythro-1-(imidazol-4-yl)glycerol 3-phosphate + 5-amino-1-(5-phospho-beta-D-ribosyl)imidazole-4-carboxamide + L-glutamate + H(+). Its pathway is amino-acid biosynthesis; L-histidine biosynthesis; L-histidine from 5-phospho-alpha-D-ribose 1-diphosphate: step 5/9. In terms of biological role, IGPS catalyzes the conversion of PRFAR and glutamine to IGP, AICAR and glutamate. The HisF subunit catalyzes the cyclization activity that produces IGP and AICAR from PRFAR using the ammonia provided by the HisH subunit. This chain is Imidazole glycerol phosphate synthase subunit HisF, found in Yersinia pseudotuberculosis serotype O:3 (strain YPIII).